The primary structure comprises 132 residues: Cytochrome B5 isoform C (132 aa).

The Cytochrome b5 heme-binding domain maps to alanine 2–aspartate 78. 2 residues coordinate heme: histidine 37 and histidine 61. A helical membrane pass occupies residues leucine 110–tyrosine 129.

It belongs to the cytochrome b5 family. As to quaternary structure, interacts with CER1, BI-1, FAH1 and FAH2.

It localises to the endoplasmic reticulum membrane. In terms of biological role, membrane bound hemoprotein which function as an electron carrier for several membrane bound oxygenases, including fatty acid desaturases. This Arabidopsis thaliana (Mouse-ear cress) protein is Cytochrome B5 isoform C.